Consider the following 179-residue polypeptide: Interleukin-22 (179 aa).

Residues 1-33 (MAVLQKSMSFSLMGTLAASCLLLIALWAQEANA) form the signal peptide. Intrachain disulfides connect cysteine 40-cysteine 132 and cysteine 89-cysteine 178. Asparagine 54, asparagine 68, and asparagine 97 each carry an N-linked (GlcNAc...) asparagine glycan.

The protein belongs to the IL-10 family.

Its subcellular location is the secreted. Functionally, cytokine that plays a critical role in modulating tissue responses during inflammation. Plays an essential role in the regeneration of epithelial cells to maintain barrier function after injury and for the prevention of further tissue damage. Unlike most of the cytokines, has no effect on immune cells. Signals through a heterodimeric receptor composed of two subunits, the specific receptor IL22RA1 which is present on non-immune cells in many organs and the shared subunit IL10RB. Ligation of IL22RA1 with IL22 induces activation of the tyrosine kinases JAK1 and TYK2, which in turn activates STAT3. In turn, promotes cell survival and proliferation through STAT3, ERK1/2 and PI3K/AKT pathways. Promotes phosphorylation of GSK3B at 'Ser-9' and CTTN. Promotes epithelial cell spreading. This Mus musculus (Mouse) protein is Interleukin-22 (Il22).